A 55-amino-acid polypeptide reads, in one-letter code: Ribulose bisphosphate carboxylase large chain (55 aa).

The active-site Proton acceptor is the His-18. Arg-19 and His-27 together coordinate substrate.

Belongs to the RuBisCO large chain family. Type I subfamily. As to quaternary structure, heterohexadecamer of 8 large chains and 8 small chains; disulfide-linked. The disulfide link is formed within the large subunit homodimers. The cofactor is Mg(2+). The disulfide bond which can form in the large chain dimeric partners within the hexadecamer appears to be associated with oxidative stress and protein turnover.

It is found in the plastid. Its subcellular location is the chloroplast. It carries out the reaction 2 (2R)-3-phosphoglycerate + 2 H(+) = D-ribulose 1,5-bisphosphate + CO2 + H2O. The catalysed reaction is D-ribulose 1,5-bisphosphate + O2 = 2-phosphoglycolate + (2R)-3-phosphoglycerate + 2 H(+). In terms of biological role, ruBisCO catalyzes two reactions: the carboxylation of D-ribulose 1,5-bisphosphate, the primary event in carbon dioxide fixation, as well as the oxidative fragmentation of the pentose substrate in the photorespiration process. Both reactions occur simultaneously and in competition at the same active site. The polypeptide is Ribulose bisphosphate carboxylase large chain (Vitis sp. (Grape)).